The following is a 400-amino-acid chain: MNDQTRAFLRERFRDYYSRSKVFVPPGLAQREWGFIFHEETVGVAMRRHKAFNSEGELADYLRSMPPAHAYHSAAYYRHPQAPTMQEKDWLGADLIFDLDADHLPGVKNMTYGEMLDNVKVEIIRLIDEFLIDDLGFREKDMDIVFSGGRGYHVHVRDERVRTLKSPERREIVDYLLGTGLEPDRMFIRTNQRIDTGTTSVAGVWLIRGFDSVPGGWDRRVARHIVEKLDQIGRLPDKDAKEALRAFSLESKDVKRILHVARDPASLQKIREKGLIELSGNLEGFFRSILAGTIDQFKVSLAGKTDEPVTADIKRLIRLPGSIHGGSSFRVTPLTRAQLESFNPLEDAIIFSDDPVRVLVTRPAVVEMKGKIYRVSEGVGRLPENVAMFLMCRGSADYEP.

Active-site residues include Asp-98, Asp-100, and Asp-306.

Belongs to the eukaryotic-type primase small subunit family. As to quaternary structure, heterodimer of a small subunit (PriS) and a large subunit (PriL). It depends on Mg(2+) as a cofactor. Mn(2+) serves as cofactor.

Functionally, catalytic subunit of DNA primase, an RNA polymerase that catalyzes the synthesis of short RNA molecules used as primers for DNA polymerase during DNA replication. The small subunit contains the primase catalytic core and has DNA synthesis activity on its own. Binding to the large subunit stabilizes and modulates the activity, increasing the rate of DNA synthesis while decreasing the length of the DNA fragments, and conferring RNA synthesis capability. The DNA polymerase activity may enable DNA primase to also catalyze primer extension after primer synthesis. May also play a role in DNA repair. The polypeptide is DNA primase small subunit PriS (Methanocella arvoryzae (strain DSM 22066 / NBRC 105507 / MRE50)).